The following is a 230-amino-acid chain: Large ribosomal subunit protein uL1 (230 aa).

The protein belongs to the universal ribosomal protein uL1 family. In terms of assembly, part of the 50S ribosomal subunit.

Functionally, binds directly to 23S rRNA. The L1 stalk is quite mobile in the ribosome, and is involved in E site tRNA release. In terms of biological role, protein L1 is also a translational repressor protein, it controls the translation of the L11 operon by binding to its mRNA. This chain is Large ribosomal subunit protein uL1, found in Ligilactobacillus salivarius (strain UCC118) (Lactobacillus salivarius).